Here is a 156-residue protein sequence, read N- to C-terminus: Ribosome maturation factor RimP (156 aa).

This sequence belongs to the RimP family.

The protein resides in the cytoplasm. Functionally, required for maturation of 30S ribosomal subunits. The sequence is that of Ribosome maturation factor RimP from Bacillus velezensis (strain DSM 23117 / BGSC 10A6 / LMG 26770 / FZB42) (Bacillus amyloliquefaciens subsp. plantarum).